A 278-amino-acid chain; its full sequence is Fasciclin-like arabinogalactan protein 5 (278 aa).

A signal peptide spans 1 to 24; the sequence is MGLKASLSLLSLTILLVFSKVVTA. Residues 25–169 form the FAS1 domain; it reads NNITLAFQKY…LSIIQITMPI (145 aa). N-linked (GlcNAc...) asparagine glycans are attached at residues Asn-26, Asn-74, Asn-126, and Asn-159. Positions 199–257 are disordered; it reads VVPAPGPAADDNSPDSAVPKTPPAPATDTPEADSPAPAPSADNEKIEAADKAKPSSSAS. Residues 224–239 show a composition bias toward low complexity; it reads ATDTPEADSPAPAPSA. Positions 240-251 are enriched in basic and acidic residues; that stretch reads DNEKIEAADKAK. Residue Ser-255 is the site of GPI-anchor amidated serine attachment. A propeptide spans 256–278 (removed in mature form); it reads ASKAGWSFDVILLLAFLASFAGF.

The protein belongs to the fasciclin-like AGP family.

Its subcellular location is the cell membrane. In terms of biological role, may be a cell surface adhesion protein. The protein is Fasciclin-like arabinogalactan protein 5 (FLA5) of Arabidopsis thaliana (Mouse-ear cress).